Here is a 434-residue protein sequence, read N- to C-terminus: GTPase Obg (434 aa).

In terms of domain architecture, Obg spans 1-159 (MQFIDRCQIK…KTVRLELKYL (159 aa)). The OBG-type G domain maps to 160-329 (ANVGIVGYPN…LVDRVFDLYQ (170 aa)). Residues 166 to 173 (GYPNAGKS), 191 to 195 (FTTLV), 212 to 215 (DIPG), 282 to 285 (NKMD), and 310 to 312 (ISA) each bind GTP. Positions 173 and 193 each coordinate Mg(2+). Residues 356-434 (EKTIDDDPLD…ICDYEYLIDE (79 aa)) enclose the OCT domain.

It belongs to the TRAFAC class OBG-HflX-like GTPase superfamily. OBG GTPase family. As to quaternary structure, monomer. Mg(2+) is required as a cofactor.

Its subcellular location is the cytoplasm. In terms of biological role, an essential GTPase which binds GTP, GDP and possibly (p)ppGpp with moderate affinity, with high nucleotide exchange rates and a fairly low GTP hydrolysis rate. Plays a role in control of the cell cycle, stress response, ribosome biogenesis and in those bacteria that undergo differentiation, in morphogenesis control. This Mycoplasmoides gallisepticum (strain R(low / passage 15 / clone 2)) (Mycoplasma gallisepticum) protein is GTPase Obg.